Consider the following 356-residue polypeptide: Nicotinate-nucleotide--dimethylbenzimidazole phosphoribosyltransferase (356 aa).

Glutamate 317 acts as the Proton acceptor in catalysis.

It belongs to the CobT family. In terms of assembly, homodimer.

The enzyme catalyses 5,6-dimethylbenzimidazole + nicotinate beta-D-ribonucleotide = alpha-ribazole 5'-phosphate + nicotinate + H(+). The protein operates within nucleoside biosynthesis; alpha-ribazole biosynthesis; alpha-ribazole from 5,6-dimethylbenzimidazole: step 1/2. Its function is as follows. Catalyzes the synthesis of alpha-ribazole-5'-phosphate from nicotinate mononucleotide (NAMN) and 5,6-dimethylbenzimidazole (DMB). The protein is Nicotinate-nucleotide--dimethylbenzimidazole phosphoribosyltransferase of Salmonella schwarzengrund (strain CVM19633).